A 500-amino-acid polypeptide reads, in one-letter code: MSDSSPTINFINFNQTGTCISLGTSKGFKIFNCEPFGKFYSEDSGGYAIVEMLFSTSLLALVGIGDQPALSPRRLRIINTKKHSIICEVTFPTSILSVKMNKSRLVVLLQEQIYIYDINTMRLLHTIETNPNPRGLMAMSPSVANSYLVYPSPPKVINSEIKAHATTNNITLSVGGNTETSFKRDQQDAGHSDISDLDQYSSFTKRDDADPTSSNGGNSSIIKNGDVIVFNLETLQPTMVIEAHKGEIAAMAISFDGTLMATASDKGTIIRVFDIETGDKIYQFRRGTYATRIYSISFSEDSQYLAVTGSSKTVHIFKLGHSMSNNKLDSDDSNMEEAAADDSSLDTTSIDALSDEENPTRLAREPYVDASRKTMGRMIRYSSQKLSRRAARTLGQIFPIKVTSLLESSRHFASLKLPVETNSHVMTISSIGSPIDIDTSEYPELFETGNSASTESYHEPVMKMVPIRVVSSDGYLYNFVMDPERGGDCLILSQYSILMD.

Residues 3–41 (DSSPTINFINFNQTGTCISLGTSKGFKIFNCEPFGKFYS) form a WD 1 repeat. Residues 174–197 (VGGNTETSFKRDQQDAGHSDISDL) are disordered. A compositionally biased stretch (basic and acidic residues) spans 181 to 194 (SFKRDQQDAGHSDI). WD repeat units follow at residues 243 to 283 (AHKG…KIYQ) and 288 to 327 (TYAT…SNNK). The L/FRRG motif signature appears at 284–288 (FRRGT). Residues 328–358 (LDSDDSNMEEAAADDSSLDTTSIDALSDEEN) form a disordered region. Residues 331–344 (DDSNMEEAAADDSS) are compositionally biased toward acidic residues. Residue Ser-354 is modified to Phosphoserine.

This sequence belongs to the WD repeat PROPPIN family. Component of the PI(3,5)P2 regulatory complex, composed of ATG18, FIG4, FAB1, VAC14 and VAC7. VAC14 nucleates the assembly of the complex and serves as a scaffold. Interacts with ATG2, ATG9 and VAC17. The ATG2-ATG18 complex is essential for autophagosome formation.

It is found in the preautophagosomal structure membrane. It localises to the vacuole membrane. The protein resides in the endosome membrane. Functionally, the PI(3,5)P2 regulatory complex regulates both the synthesis and turnover of phosphatidylinositol 3,5-bisphosphate (PtdIns(3,5)P2). May negatively regulate FAB1 activity by sequestering or masking VAC7 from FAB1. Necessary for proper vacuole morphology. Plays an important role in osmotically-induced vacuole fragmentation. Required for cytoplasm to vacuole transport (Cvt) vesicle formation, pexophagy and starvation-induced autophagy. Involved in correct ATG9 trafficking to the pre-autophagosomal structure. Might also be involved in premeiotic DNA replication. With ATG2, protects ATG8 from ARG4-mediated cleavage. This Saccharomyces cerevisiae (strain YJM789) (Baker's yeast) protein is Autophagy-related protein 18 (ATG18).